Here is a 657-residue protein sequence, read N- to C-terminus: Hemocyanin B chain (657 aa).

C93 and C98 form a disulfide bridge. N-linked (GlcNAc...) asparagine glycosylation is present at N167. H194, H198, H224, H344, H348, and H384 together coordinate Cu cation. Intrachain disulfides connect C483/C502 and C562/C609.

It belongs to the tyrosinase family. Hemocyanin subfamily. In terms of assembly, hexamer of a number of different chains, of which A, B, and C have been identified. Hemolymph.

The protein resides in the secreted. The protein localises to the extracellular space. In terms of biological role, hemocyanins are copper-containing oxygen carriers occurring freely dissolved in the hemolymph of many mollusks and arthropods. This is Hemocyanin B chain from Panulirus interruptus (California spiny lobster).